The chain runs to 188 residues: Elongation factor P 1 (188 aa).

It belongs to the elongation factor P family.

The protein localises to the cytoplasm. It functions in the pathway protein biosynthesis; polypeptide chain elongation. In terms of biological role, involved in peptide bond synthesis. Stimulates efficient translation and peptide-bond synthesis on native or reconstituted 70S ribosomes in vitro. Probably functions indirectly by altering the affinity of the ribosome for aminoacyl-tRNA, thus increasing their reactivity as acceptors for peptidyl transferase. The polypeptide is Elongation factor P 1 (Mesorhizobium japonicum (strain LMG 29417 / CECT 9101 / MAFF 303099) (Mesorhizobium loti (strain MAFF 303099))).